The chain runs to 201 residues: UPF0301 protein Avi_1069 (201 aa).

It belongs to the UPF0301 (AlgH) family.

This chain is UPF0301 protein Avi_1069, found in Allorhizobium ampelinum (strain ATCC BAA-846 / DSM 112012 / S4) (Agrobacterium vitis (strain S4)).